A 468-amino-acid chain; its full sequence is Glutamate--tRNA ligase 2 (468 aa).

Positions 9–19 (PSPTGSLHLGG) match the 'HIGH' region motif. A 'KMSKS' region motif is present at residues 238–242 (KLSKR). Lys241 contacts ATP.

The protein belongs to the class-I aminoacyl-tRNA synthetase family. Glutamate--tRNA ligase type 1 subfamily. Monomer.

Its subcellular location is the cytoplasm. The enzyme catalyses tRNA(Glu) + L-glutamate + ATP = L-glutamyl-tRNA(Glu) + AMP + diphosphate. In terms of biological role, catalyzes the attachment of glutamate to tRNA(Glu) in a two-step reaction: glutamate is first activated by ATP to form Glu-AMP and then transferred to the acceptor end of tRNA(Glu). The polypeptide is Glutamate--tRNA ligase 2 (Anaplasma phagocytophilum (strain HZ)).